Consider the following 195-residue polypeptide: Calcineurin B homologous protein 1 (195 aa).

Residue Gly2 is the site of N-myristoyl glycine attachment. Positions 2 to 6 (GSRAS) match the Necessary for association with microtubule and interaction with GAPDH motif. EF-hand domains lie at 26 to 61 (SQIT…AINP), 66 to 101 (IINA…KSKD), 110 to 145 (SRSN…MVGV), and 151 to 186 (QLGS…VDVE). 5 residues coordinate Ca(2+): Asp123, Asp125, Asp127, Lys129, and Glu134. The short motif at 138–147 (VLRMMVGVNI) is the Nuclear export signal 1 element. Asp164, Asp166, Asp168, and Glu175 together coordinate Ca(2+). Positions 176–185 (FVKVLEKVDV) match the Nuclear export signal 2 motif.

It belongs to the calcineurin regulatory subunit family. CHP subfamily. In terms of assembly, monomer. Interacts with STK17B; the interaction occurs in a calcium-independent manner and induces the translocation of CHP1 from the Golgi to the nucleus. Interacts with GAPDH; the interaction is direct, occurs in a N-myristoylation-dependent manner and facilitates the ability of CHP1 to bind microtubules. Interacts with KIF1B (via the C-terminal end of the kinesin-motor domain); the interaction occurs in a calcium-dependent manner. Associates (via C-terminal domain) with microtubules; the association occurs with polymerized microtubules during the cell cycle in a myristoylation- and calcium-independent manner and is enhanced by GAPDH. Interacts with PPP3CA. Interacts with SLC9A1/NHE1 (via the cytoplasmic C-terminal domain); the interaction occurs at the plasma membrane in a calcium-dependent manner and at a domain that is critical for growth factor stimulation of the exchanger. Interacts with SLC9A3; increases SLC9A3 trafficking and activity at the plasma membrane. Phosphorylated; decreased phosphorylation is associated with an increase in SLC9A1/NHE1 Na(+)/H(+) exchange activity. Phosphorylation occurs in serum-dependent manner. The phosphorylation state may regulate the binding to SLC9A1/NHE1. In terms of processing, both N-myristoylation and calcium-mediated conformational changes are essential for its function in exocytic traffic. N-myristoylation is required for its association with microtubules and interaction with GAPDH, but not for the constitutive association to membranes.

It is found in the nucleus. Its subcellular location is the cytoplasm. It localises to the cytoskeleton. The protein resides in the endomembrane system. The protein localises to the endoplasmic reticulum-Golgi intermediate compartment. It is found in the endoplasmic reticulum. Its subcellular location is the cell membrane. It localises to the membrane. Functionally, calcium-binding protein involved in different processes such as regulation of vesicular trafficking, plasma membrane Na(+)/H(+) exchanger and gene transcription. Involved in the constitutive exocytic membrane traffic. Mediates the association between microtubules and membrane-bound organelles of the endoplasmic reticulum and Golgi apparatus and is also required for the targeting and fusion of transcytotic vesicles (TCV) with the plasma membrane. Functions as an integral cofactor in cell pH regulation by controlling plasma membrane-type Na(+)/H(+) exchange activity. Affects the pH sensitivity of SLC9A1/NHE1 by increasing its sensitivity at acidic pH. Required for the stabilization and localization of SLC9A1/NHE1 at the plasma membrane. Inhibits serum- and GTPase-stimulated Na(+)/H(+) exchange. Plays a role as an inhibitor of ribosomal RNA transcription by repressing the nucleolar UBF1 transcriptional activity. May sequester UBF1 in the nucleoplasm and limit its translocation to the nucleolus. Associates to the ribosomal gene promoter. Acts as a negative regulator of the calcineurin/NFAT signaling pathway. Inhibits NFAT nuclear translocation and transcriptional activity by suppressing the calcium-dependent calcineurin phosphatase activity. Also negatively regulates the kinase activity of the apoptosis-induced kinase STK17B. Inhibits both STK17B auto- and substrate-phosphorylations in a calcium-dependent manner. This Bos taurus (Bovine) protein is Calcineurin B homologous protein 1 (CHP1).